Consider the following 99-residue polypeptide: Putative protein adenylyltransferase MJ0141 (99 aa).

Residues glycine 29 to aspartate 43 carry the GSX(10)DXD motif motif. Mg(2+)-binding residues include aspartate 41 and aspartate 43.

It belongs to the MntA antitoxin family. Requires Mg(2+) as cofactor.

It catalyses the reaction L-tyrosyl-[protein] + ATP = O-(5'-adenylyl)-L-tyrosyl-[protein] + diphosphate. It carries out the reaction O-(5'-adenylyl)-L-tyrosyl-[protein] + ATP = O-[5'-(adenylyl-(5'-&gt;3')-adenylyl)]-L-tyrosyl-[protein] + diphosphate. Its function is as follows. Putative antitoxin component of a putative type VII toxin-antitoxin (TA) system. Its cognate toxin might be MF0142, which it might AMPylate. The sequence is that of Putative protein adenylyltransferase MJ0141 from Methanocaldococcus jannaschii (strain ATCC 43067 / DSM 2661 / JAL-1 / JCM 10045 / NBRC 100440) (Methanococcus jannaschii).